The primary structure comprises 633 residues: Opioid growth factor receptor (633 aa).

Met-1 carries the post-translational modification N-acetylmethionine. The segment covering 1-38 (MDDPECDSTWEDESEEDGEDGQADDTTDEDTGDDDGDA) has biased composition (acidic residues). The segment at 1–44 (MDDPECDSTWEDESEEDGEDGQADDTTDEDTGDDDGDAEEARPS) is disordered. Residues 257–286 (RRELVHFAWEHFKPRREFVWGPRDKLRRFR) carry the Bipartite nuclear localization signal motif. A disordered region spans residues 287–390 (PQTISRPLMG…EPDPQGVSEV (104 aa)). Phosphoserine is present on residues Ser-327, Ser-340, Ser-361, Ser-365, Ser-403, and Ser-452. Residues 351-374 (GDQRHEAKSPSPKESKKRKLEGNR) are compositionally biased toward basic and acidic residues. The disordered stretch occupies residues 404 to 633 (PTSQEPREAE…IEASVEPPKP (230 aa)). Residues 441–455 (ASNTQVQASALSPTP) are compositionally biased toward polar residues. 14 repeat units span residues 467–475 (GPEDPKSQV), 476–484 (GPEDPKSQV), 485–493 (GPEDPKSQV), 494–502 (GPEDPKSQV), 503–511 (GPEDPKGQV), 512–520 (EPEDPKGQV), 521–529 (GPEDPKGQV), 530–538 (GPEDPKGQV), 539–547 (GPEDPKSQV), 548–556 (GPEDPKSQV), 557–565 (EPEDPKSQV), 566–574 (EPEDPKSQV), 575–583 (EPEDPKSQV), and 584–592 (GPEDPQSQV). A 14 X approximate tandem repeats region spans residues 467-592 (GPEDPKSQVG…VGPEDPQSQV (126 aa)). Over residues 505 to 517 (EDPKGQVEPEDPK) the composition is skewed to basic and acidic residues. Over residues 550–580 (EDPKSQVEPEDPKSQVEPEDPKSQVEPEDPK) the composition is skewed to basic and acidic residues. Phosphoserine is present on residues Ser-601 and Ser-608.

The protein belongs to the opioid growth factor receptor family. Expressed in all tissues examined, including brain, heart, lung, liver, kidney and skeletal muscle.

It is found in the cytoplasm. The protein resides in the nucleus. In terms of biological role, receptor for opioid growth factor (OGF), also known as Met-enkephalin. Seems to be involved in growth regulation. The chain is Opioid growth factor receptor (Ogfr) from Mus musculus (Mouse).